The following is a 319-amino-acid chain: Melanoma-associated antigen B2 (319 aa).

The span at 1–17 (MPRGQKSKLRAREKRRK) shows a compositional bias: basic residues. Residues 1 to 112 (MPRGQKSKLR…TKSPSEDPLT (112 aa)) are disordered. 3 stretches are compositionally biased toward low complexity: residues 39–57 (PCCS…PAAG), 67–79 (TTAA…VSST), and 94–105 (ASSSQASTSTKS). Residues serine 77 and serine 105 each carry the phosphoserine modification. In terms of domain architecture, MAGE spans 111 to 310 (LTRKSGSLVQ…CAFPTHYEEA (200 aa)).

Interacts with TRIM28. In terms of tissue distribution, expressed in testis and placenta, and in a significant fraction of tumors of various histologic types.

May enhance ubiquitin ligase activity of RING-type zinc finger-containing E3 ubiquitin-protein ligases. Proposed to act through recruitment and/or stabilization of the Ubl-conjugating enzyme (E2) at the E3:substrate complex. In Homo sapiens (Human), this protein is Melanoma-associated antigen B2 (MAGEB2).